The sequence spans 340 residues: NADPH dehydrogenase (340 aa).

Residue 23–26 (SPMC) participates in FMN binding. Tyr28 contacts substrate. FMN-binding residues include Ala60 and Gln102. Position 164 to 167 (164 to 167 (HAAH)) interacts with substrate. FMN contacts are provided by residues Arg215 and 307 to 308 (GR).

Belongs to the NADH:flavin oxidoreductase/NADH oxidase family. NamA subfamily. In terms of assembly, homotetramer. FMN serves as cofactor.

It carries out the reaction A + NADPH + H(+) = AH2 + NADP(+). In terms of biological role, catalyzes the reduction of the double bond of an array of alpha,beta-unsaturated aldehydes and ketones. It also reduces the nitro group of nitroester and nitroaromatic compounds. It could have a role in detoxification processes. The chain is NADPH dehydrogenase from Geobacillus thermodenitrificans (strain NG80-2).